The chain runs to 408 residues: Protein CNPPD1 (408 aa).

Residues 233–253 traverse the membrane as a helical segment; it reads CLLAVAYVSSVALAVASMAVI.

The protein belongs to the CNPPD1 family.

The protein resides in the membrane. The protein is Protein CNPPD1 (Cnppd1) of Rattus norvegicus (Rat).